We begin with the raw amino-acid sequence, 134 residues long: MKSVFTLSASLAISLLLCCTAQANNHKILGVIAMPRNETNDLALKLPVCRIVKRIQLTADHGDLQLSGAAVYFKAARSASQSLNIPSEIKEGQTTDWININSDNDNKRCVSKITFSGHTVNSSDMATLKIIGDD.

The first 23 residues, 1–23, serve as a signal peptide directing secretion; it reads MKSVFTLSASLAISLLLCCTAQA.

It belongs to the UPF0412 family.

The protein is UPF0412 protein YaaI of Escherichia coli O7:K1 (strain IAI39 / ExPEC).